A 268-amino-acid chain; its full sequence is Bis(5'-nucleosyl)-tetraphosphatase, symmetrical (268 aa).

The protein belongs to the Ap4A hydrolase family.

The catalysed reaction is P(1),P(4)-bis(5'-adenosyl) tetraphosphate + H2O = 2 ADP + 2 H(+). Its function is as follows. Hydrolyzes diadenosine 5',5'''-P1,P4-tetraphosphate to yield ADP. This Vibrio parahaemolyticus serotype O3:K6 (strain RIMD 2210633) protein is Bis(5'-nucleosyl)-tetraphosphatase, symmetrical.